Here is a 104-residue protein sequence, read N- to C-terminus: Thioredoxin (104 aa).

The region spanning 2–104 (AIVKVTDSDF…NLAEVLDKHL (103 aa)) is the Thioredoxin domain. Cys29 and Cys32 are oxidised to a cystine.

Belongs to the thioredoxin family.

Component of the thioredoxin-thioredoxin reductase system. Participates in various redox reactions through the reversible oxidation of its active center dithiol to a disulfide and catalyzes dithiol-disulfide exchange reactions. The chain is Thioredoxin (trxA) from Staphylococcus epidermidis (strain ATCC 35984 / DSM 28319 / BCRC 17069 / CCUG 31568 / BM 3577 / RP62A).